Consider the following 90-residue polypeptide: Small ribosomal subunit protein bS16 (90 aa).

It belongs to the bacterial ribosomal protein bS16 family.

The protein is Small ribosomal subunit protein bS16 of Lactobacillus helveticus (strain DPC 4571).